A 68-amino-acid chain; its full sequence is Virion membrane protein OPG139 (68 aa).

Residues 1–21 (MIGILLLIGICVAVTVAILYA) traverse the membrane as a helical segment. Residues 22–68 (MYNKIKNSQNPSPNVNLPPPETRNTRFVNNLEKDHISSLYNLVKSSV) lie on the Virion surface side of the membrane.

The protein belongs to the orthopoxvirus OPG139 family. Phosphorylated by a OPG054-independent mechanism.

The protein resides in the virion membrane. Its function is as follows. Essential for the encapsidation of DNA into immature virions (IV) and the subsequent maturation of IV into mature virions (MV). The protein is Virion membrane protein OPG139 (OPG139) of Homo sapiens (Human).